A 238-amino-acid chain; its full sequence is Probable transcriptional regulatory protein YeeN (238 aa).

Belongs to the TACO1 family. YeeN subfamily.

It is found in the cytoplasm. The protein is Probable transcriptional regulatory protein YeeN of Shigella flexneri.